A 590-amino-acid chain; its full sequence is RNA-binding protein 47 (590 aa).

A compositionally biased stretch (polar residues) spans 1-21 (MTAEDSTTAMNSDPTVGSSTK). The tract at residues 1–26 (MTAEDSTTAMNSDPTVGSSTKVPEGV) is disordered. RRM domains lie at 71-149 (CEVF…CSVD), 151-233 (CRLF…WAEP), and 246-318 (KILY…LAKP). R396 and R407 each carry asymmetric dimethylarginine; alternate. R396 and R407 each carry omega-N-methylarginine; alternate.

This sequence belongs to the RRM RBM47 family. In terms of assembly, homodimer. Interacts with A1CF. Interacts with APOBEC1; form an mRNA editing complex. Interacts with RBPMS.

It is found in the nucleus. The protein localises to the cytoplasm. In terms of biological role, single-stranded RNA-binding protein that functions in a variety of RNA processes, including alternative splicing, RNA stabilization, and RNA editing. Functions as an enzyme-substrate adapter for the cytidine deaminase APOBEC1. With APOBEC1 forms an mRNA editing complex involved into cytidine to uridine editing of a variety of mRNA molecules. Through the binding of their 3'UTR, also stabilizes a variety of mRNAs and regulates the expression of genes such as the interferon alpha/beta receptor and interleukin-10. Also involved in the alternative splicing of several genes including TJP1. Binds the pre-mRNA (U)GCAUG consensus sequences in downstream intronic regions of alternative exons regulating their exclusion and inclusion into mRNAs. Independently of its RNA-binding activity, could negatively regulate MAVS by promoting its lysosomal degradation. The polypeptide is RNA-binding protein 47 (Rattus norvegicus (Rat)).